A 257-amino-acid polypeptide reads, in one-letter code: 3-methyl-2-oxobutanoate hydroxymethyltransferase (257 aa).

Mg(2+) contacts are provided by aspartate 42 and aspartate 86. 3-methyl-2-oxobutanoate contacts are provided by residues 42 to 43 (DS), aspartate 86, and lysine 116. Glutamate 118 is a binding site for Mg(2+). Glutamate 185 functions as the Proton acceptor in the catalytic mechanism.

This sequence belongs to the PanB family. Homodecamer; pentamer of dimers. Mg(2+) is required as a cofactor.

It is found in the cytoplasm. The catalysed reaction is 3-methyl-2-oxobutanoate + (6R)-5,10-methylene-5,6,7,8-tetrahydrofolate + H2O = 2-dehydropantoate + (6S)-5,6,7,8-tetrahydrofolate. The protein operates within cofactor biosynthesis; (R)-pantothenate biosynthesis; (R)-pantoate from 3-methyl-2-oxobutanoate: step 1/2. Its function is as follows. Catalyzes the reversible reaction in which hydroxymethyl group from 5,10-methylenetetrahydrofolate is transferred onto alpha-ketoisovalerate to form ketopantoate. The sequence is that of 3-methyl-2-oxobutanoate hydroxymethyltransferase from Prochlorococcus marinus (strain AS9601).